The sequence spans 615 residues: DNA mismatch repair protein MutL (615 aa).

The disordered stretch occupies residues 363 to 397 (FAEPAAREPVAPRYTPAPASGSRPAAPWPNAQPGY). Low complexity predominate over residues 364-391 (AEPAAREPVAPRYTPAPASGSRPAAPWP).

The protein belongs to the DNA mismatch repair MutL/HexB family.

Its function is as follows. This protein is involved in the repair of mismatches in DNA. It is required for dam-dependent methyl-directed DNA mismatch repair. May act as a 'molecular matchmaker', a protein that promotes the formation of a stable complex between two or more DNA-binding proteins in an ATP-dependent manner without itself being part of a final effector complex. This is DNA mismatch repair protein MutL from Shigella boydii serotype 18 (strain CDC 3083-94 / BS512).